A 243-amino-acid chain; its full sequence is GTP cyclohydrolase 1 (243 aa).

Thr-15 carries the phosphothreonine modification. A disordered region spans residues 18 to 55 (NIRPTSPYTLNPPVERDGFSWPSVGTRQRAEETEEEEK). Ser-23 carries the post-translational modification Phosphoserine. Zn(2+) contacts are provided by Cys-132, His-135, and Cys-203.

It belongs to the GTP cyclohydrolase I family. As to quaternary structure, homodimer.

The enzyme catalyses GTP + H2O = 7,8-dihydroneopterin 3'-triphosphate + formate + H(+). It functions in the pathway cofactor biosynthesis; 7,8-dihydroneopterin triphosphate biosynthesis; 7,8-dihydroneopterin triphosphate from GTP: step 1/1. GTP cyclohydrolase 1 is the first enzyme in the biosynthetic pathway leading to folic acid. This Saccharomyces cerevisiae (strain ATCC 204508 / S288c) (Baker's yeast) protein is GTP cyclohydrolase 1.